Consider the following 545-residue polypeptide: Periplasmic trehalase (545 aa).

A signal peptide spans 1 to 30 (MPDRTALPRAMLAAWVLLLLAACSQGPAPT). Substrate contacts are provided by residues R160, 167 to 168 (WD), N204, 213 to 215 (RSQ), 285 to 287 (RQE), and G318. Residues D320 and E503 each act as proton donor/acceptor in the active site. E518 serves as a coordination point for substrate.

The protein belongs to the glycosyl hydrolase 37 family.

Its subcellular location is the periplasm. The catalysed reaction is alpha,alpha-trehalose + H2O = alpha-D-glucose + beta-D-glucose. In terms of biological role, provides the cells with the ability to utilize trehalose at high osmolarity by splitting it into glucose molecules that can subsequently be taken up by the phosphotransferase-mediated uptake system. The chain is Periplasmic trehalase from Pseudomonas aeruginosa (strain ATCC 15692 / DSM 22644 / CIP 104116 / JCM 14847 / LMG 12228 / 1C / PRS 101 / PAO1).